Reading from the N-terminus, the 575-residue chain is V-type ATP synthase alpha chain (575 aa).

An ATP-binding site is contributed by 238-245 (GPFGAGKT).

The protein belongs to the ATPase alpha/beta chains family.

It catalyses the reaction ATP + H2O + 4 H(+)(in) = ADP + phosphate + 5 H(+)(out). Functionally, produces ATP from ADP in the presence of a proton gradient across the membrane. The V-type alpha chain is a catalytic subunit. The polypeptide is V-type ATP synthase alpha chain (Borreliella afzelii (strain PKo) (Borrelia afzelii)).